Reading from the N-terminus, the 343-residue chain is UBP1-associated proteins 1A (343 aa).

The segment at 1–61 (MAKTLDKSKK…SESDNEFDPE (61 aa)) is disordered. Over residues 28-49 (NKQQQQPESSTPYSSSSSSSDS) the composition is skewed to low complexity. Over residues 50 to 61 (SDSESDNEFDPE) the composition is skewed to acidic residues. An RRM domain is found at 104 to 181 (RKIFVYGLPW…RTATCQLASM (78 aa)). The interval 312-343 (STYPDSDAGGKRGTGKDSDAGGSSFHGYSNYS) is disordered. A compositionally biased stretch (basic and acidic residues) spans 319-330 (AGGKRGTGKDSD).

As to quaternary structure, interacts with UBA1A, UBA2A, UBP1A, UBP1B and UBP1C.

It is found in the nucleus. Acts as a component of a complex regulating the turnover of mRNAs in the nucleus. Binds with high affinity to RNA molecules that contain U-rich sequences in 3'-UTRs. May function in complex with UBP1 and contribute to the stabilization of mRNAs in the nucleus. However, unlike UBP1, UBA1A does not stimulate pre-mRNA splicing. In Arabidopsis thaliana (Mouse-ear cress), this protein is UBP1-associated proteins 1A (UBA1A).